A 260-amino-acid chain; its full sequence is uncharacterized protein (260 aa).

Residues valine 7–threonine 67 form the HTH iclR-type domain. A DNA-binding region (H-T-H motif) is located at residues alanine 28–asparagine 47. The IclR-ED domain maps to leucine 82–tryptophan 251.

This is an uncharacterized protein from Escherichia coli (strain K12).